The following is a 260-amino-acid chain: Large ribosomal subunit protein uL30 (260 aa).

Met-1 carries the post-translational modification N-acetylmethionine. Repeat copies occupy residues 7–18 (KKKKVAAALGTL), 19–30 (KKKKVPAVPETL), 31–42 (KKKRRNFAELKV), 43–54 (KRLRKKFALKTL), and 55–66 (RKARRKLIYEKA). The tract at residues 7–66 (KKKKVAAALGTLKKKKVPAVPETLKKKRRNFAELKVKRLRKKFALKTLRKARRKLIYEKA) is 5 X 12 AA tandem repeats. Thr-29 carries the phosphothreonine modification. N6-acetyllysine is present on Lys-136. N6-succinyllysine is present on Lys-139. The residue at position 151 (Tyr-151) is a Phosphotyrosine.

This sequence belongs to the universal ribosomal protein uL30 family. Component of the large ribosomal subunit. Homodimer. Interacts with DHX33.

Its subcellular location is the cytoplasm. Component of the large ribosomal subunit. The ribosome is a large ribonucleoprotein complex responsible for the synthesis of proteins in the cell. Binds to G-rich structures in 28S rRNA and in mRNAs. Plays a regulatory role in the translation apparatus; inhibits cell-free translation of mRNAs. This Rattus norvegicus (Rat) protein is Large ribosomal subunit protein uL30 (Rpl7).